The chain runs to 513 residues: ATP synthase subunit alpha (513 aa).

169–176 (GDRQTGKT) is a binding site for ATP.

This sequence belongs to the ATPase alpha/beta chains family. As to quaternary structure, F-type ATPases have 2 components, CF(1) - the catalytic core - and CF(0) - the membrane proton channel. CF(1) has five subunits: alpha(3), beta(3), gamma(1), delta(1), epsilon(1). CF(0) has three main subunits: a(1), b(2) and c(9-12). The alpha and beta chains form an alternating ring which encloses part of the gamma chain. CF(1) is attached to CF(0) by a central stalk formed by the gamma and epsilon chains, while a peripheral stalk is formed by the delta and b chains.

Its subcellular location is the cell inner membrane. The catalysed reaction is ATP + H2O + 4 H(+)(in) = ADP + phosphate + 5 H(+)(out). Its function is as follows. Produces ATP from ADP in the presence of a proton gradient across the membrane. The alpha chain is a regulatory subunit. This Pasteurella multocida (strain Pm70) protein is ATP synthase subunit alpha.